Reading from the N-terminus, the 256-residue chain is tRNA pseudouridine synthase A (256 aa).

The active-site Nucleophile is D43. Substrate is bound at residue Y94.

It belongs to the tRNA pseudouridine synthase TruA family.

The catalysed reaction is uridine(38/39/40) in tRNA = pseudouridine(38/39/40) in tRNA. Formation of pseudouridine at positions 38, 39 and 40 in the anticodon stem and loop of transfer RNAs. This chain is tRNA pseudouridine synthase A, found in Pyrobaculum aerophilum (strain ATCC 51768 / DSM 7523 / JCM 9630 / CIP 104966 / NBRC 100827 / IM2).